We begin with the raw amino-acid sequence, 345 residues long: GMP reductase 1 (345 aa).

Residue 26–27 (SR) participates in NADP(+) binding. S28 is modified (phosphoserine). NADP(+) is bound by residues K78, 129–131 (DVA), and 180–181 (VG). 3 residues coordinate K(+): G181, G183, and C186. The active-site Thioimidate intermediate is the C186. T188 serves as the catalytic Proton donor/acceptor. A K(+)-binding site is contributed by R189. GMP-binding positions include 219-221 (DGG), 242-243 (GG), 268-270 (GMS), and 286-290 (RASEG). Residues M269, 285-286 (YR), and 314-317 (STCT) contribute to the NADP(+) site.

The protein belongs to the IMPDH/GMPR family. GuaC type 1 subfamily. In terms of assembly, homotetramer.

It carries out the reaction IMP + NH4(+) + NADP(+) = GMP + NADPH + 2 H(+). Functionally, catalyzes the irreversible NADPH-dependent deamination of GMP to IMP. It functions in the conversion of nucleobase, nucleoside and nucleotide derivatives of G to A nucleotides, and in maintaining the intracellular balance of A and G nucleotides. In Mus musculus (Mouse), this protein is GMP reductase 1 (Gmpr).